Reading from the N-terminus, the 1163-residue chain is Rho GTPase-activating protein 45 (1163 aa).

The disordered stretch occupies residues 1 to 99 (MFSRKKRELM…KRPTSLSRHA (99 aa)). Phosphoserine is present on residues S23 and S25. Positions 55–65 (LPKELPRKDGA) are enriched in basic and acidic residues. A phosphoserine mark is found at S100, S120, and S126. 3 disordered regions span residues 118 to 137 (HRSPLTAASPGELPTEGTGP), 262 to 282 (PPGDSSQSMESLYGSGSEGTP), and 454 to 475 (EEEQAGTAPGAGSTATKTLDKR). One can recognise an F-BAR domain in the interval 296 to 566 (EEVDVLLQRC…SSKLYDPGQQ (271 aa)). A coiled-coil region spans residues 403–526 (EHEKRRKEIK…QIQEVIRQSD (124 aa)). The segment covering 458-470 (AGTAPGAGSTATK) has biased composition (low complexity). S596, S605, and S619 each carry phosphoserine. The disordered stretch occupies residues 610–695 (DVAGPEAAGS…VDPEGGAGAS (86 aa)). Residues 633–644 (KGHRAGRGHQVH) are compositionally biased toward basic residues. At S646 the chain carries Phosphoserine. The span at 673–682 (TSSSGTMSST) shows a compositional bias: low complexity. The Phorbol-ester/DAG-type zinc finger occupies 729–774 (THRLRKLRTPAKCRECNSYVYFQGAECEECCLACHKKCLETLAIQC). The Rho-GAP domain occupies 788 to 1001 (QDFSHAARSA…TLIVHYGLVF (214 aa)). S976, S1054, S1057, and S1059 each carry phosphoserine. 2 disordered regions span residues 1042-1067 (AAEDGCRESRVVSNDSDSDLEEASEL) and 1087-1163 (SEAS…PEFV). Residues 1087 to 1099 (SEASLEEASGSHS) show a composition bias toward low complexity. The segment covering 1125–1137 (SGFNTNQSNNVLQ) has biased composition (polar residues).

It localises to the cytoplasm. The protein resides in the cell projection. It is found in the ruffle membrane. In terms of biological role, contains a GTPase activator for the Rho-type GTPases (RhoGAP) domain that would be able to negatively regulate the actin cytoskeleton as well as cell spreading. However, also contains N-terminally a BAR-domin which is able to play an autoinhibitory effect on this RhoGAP activity. This chain is Rho GTPase-activating protein 45, found in Pongo abelii (Sumatran orangutan).